The sequence spans 593 residues: MAFRRAEGTSMIQALAMTVAEIPVFLYTTFGQSAFSQLRLTPGLRKVLFATALGTVALALAAHQLKRRRRRKKQVGPEMGGEQLGTVPLPILLARKVPSVKKGYSSRRVQSPSSKSNDTLSGISSIEPSKHSGSSHSVASMMAVNSSSPTAACSGLWDARGMEESLTTSDGNAESLYMQGMELFEEALQKWEQALSVGQRGDSGSTPMPRDGLRNPETASEPLSEPESQRKEFAEKLESLLHRAYHLQEEFGSTFPADSMLLDLERTLMLPLTEGSLRLRADDEDSLTSEDSFFSATELFESLQTGDYPIPLSRPAAAYEEALQLVKEGRVPCRTLRTELLGCYSDQDFLAKLHCVRQAFEGLLEDKSNQLFFGKVGRQMVTGLMTKAEKSPKGFLESYEEMLSYALRPETWATTRLELEGRGVVCMSFFDIVLDFILMDAFEDLENPPASVLAVLRNRWLSDSFKETALATACWSVLKAKRRLLMVPDGFISHFYSVSEHVSPVLAFGFLGPKPQLAEVCAFFKHQIVQYLRDMFDLDNVRYTSLPALADDILQLSRRRSEILLGYLGVPAASSAGVNGALPRENGPLGELQ.

2 helical membrane passes run 11-31 (MIQA…TTFG) and 42-62 (PGLR…ALAA). 2 disordered regions span residues 103–141 (GYSS…VASM) and 196–231 (SVGQ…SQRK). 2 stretches are compositionally biased toward low complexity: residues 106-116 (SRRVQSPSSKS) and 123-141 (ISSI…VASM). S132 is subject to Phosphoserine. At T206 the chain carries Phosphothreonine. Residues S220, S224, and S228 each carry the phosphoserine modification. A Phosphothreonine modification is found at T273. Phosphoserine is present on residues S276 and S295. Positions 292–298 (SFFSATE) match the FFAT motif.

The protein belongs to the mitoguardin family. As to quaternary structure, homodimer and heterodimer; forms heterodimers with MIGA1. Interacts with PLD6/MitoPLD. Interacts (via phosphorylated FFAT motif) with MOSPD2, VAPA and VAPB. Phosphorylation at Ser-295 of the FFAT motif activates interaction with MOSPD2, VAPA and VAPB.

The protein localises to the mitochondrion outer membrane. Regulator of mitochondrial fusion: acts by forming homo- and heterodimers at the mitochondrial outer membrane and facilitating the formation of PLD6/MitoPLD dimers. May act by regulating phospholipid metabolism via PLD6/MitoPLD. In Homo sapiens (Human), this protein is Mitoguardin 2.